The following is a 356-amino-acid chain: Fe(3+) ions import ATP-binding protein FbpC 2 (356 aa).

Positions 12–246 constitute an ABC transporter domain; the sequence is LTVKNLNKFF…PNHLETAKFM (235 aa). Position 44–51 (44–51) interacts with ATP; it reads GSSGCGKT.

The protein belongs to the ABC transporter superfamily. Fe(3+) ion importer (TC 3.A.1.10) family. As to quaternary structure, the complex is composed of two ATP-binding proteins (FbpC), two transmembrane proteins (FbpB) and a solute-binding protein (FbpA).

The protein localises to the cell inner membrane. It carries out the reaction Fe(3+)(out) + ATP + H2O = Fe(3+)(in) + ADP + phosphate + H(+). Its function is as follows. Part of the ABC transporter complex FbpABC involved in Fe(3+) ions import. Responsible for energy coupling to the transport system. The protein is Fe(3+) ions import ATP-binding protein FbpC 2 of Haemophilus influenzae (strain ATCC 51907 / DSM 11121 / KW20 / Rd).